The following is a 546-amino-acid chain: Chaperonin GroEL (546 aa).

ATP-binding positions include 29-32, K50, 86-90, G414, and D492; these read TMGP and DGTTT.

This sequence belongs to the chaperonin (HSP60) family. Forms a cylinder of 14 subunits composed of two heptameric rings stacked back-to-back. Interacts with the co-chaperonin GroES.

It localises to the cytoplasm. The catalysed reaction is ATP + H2O + a folded polypeptide = ADP + phosphate + an unfolded polypeptide.. Together with its co-chaperonin GroES, plays an essential role in assisting protein folding. The GroEL-GroES system forms a nano-cage that allows encapsulation of the non-native substrate proteins and provides a physical environment optimized to promote and accelerate protein folding. This is Chaperonin GroEL from Helicobacter pylori (strain J99 / ATCC 700824) (Campylobacter pylori J99).